The primary structure comprises 300 residues: Acetylglutamate kinase (300 aa).

Substrate is bound by residues 72 to 73 (GG), R94, and N197.

Belongs to the acetylglutamate kinase family. ArgB subfamily.

It localises to the cytoplasm. It catalyses the reaction N-acetyl-L-glutamate + ATP = N-acetyl-L-glutamyl 5-phosphate + ADP. It participates in amino-acid biosynthesis; L-arginine biosynthesis; N(2)-acetyl-L-ornithine from L-glutamate: step 2/4. In terms of biological role, catalyzes the ATP-dependent phosphorylation of N-acetyl-L-glutamate. This Aromatoleum aromaticum (strain DSM 19018 / LMG 30748 / EbN1) (Azoarcus sp. (strain EbN1)) protein is Acetylglutamate kinase.